The chain runs to 222 residues: Deoxyribose-phosphate aldolase (222 aa).

Aspartate 89 serves as the catalytic Proton donor/acceptor. Lysine 152 (schiff-base intermediate with acetaldehyde) is an active-site residue. Lysine 181 acts as the Proton donor/acceptor in catalysis.

The protein belongs to the DeoC/FbaB aldolase family. DeoC type 1 subfamily.

The protein resides in the cytoplasm. The catalysed reaction is 2-deoxy-D-ribose 5-phosphate = D-glyceraldehyde 3-phosphate + acetaldehyde. The protein operates within carbohydrate degradation; 2-deoxy-D-ribose 1-phosphate degradation; D-glyceraldehyde 3-phosphate and acetaldehyde from 2-deoxy-alpha-D-ribose 1-phosphate: step 2/2. Its function is as follows. Catalyzes a reversible aldol reaction between acetaldehyde and D-glyceraldehyde 3-phosphate to generate 2-deoxy-D-ribose 5-phosphate. In Clostridium novyi (strain NT), this protein is Deoxyribose-phosphate aldolase.